The following is a 235-amino-acid chain: 2,3,4,5-tetrahydropyridine-2,6-dicarboxylate N-acetyltransferase (235 aa).

The protein belongs to the transferase hexapeptide repeat family. DapH subfamily.

It catalyses the reaction (S)-2,3,4,5-tetrahydrodipicolinate + acetyl-CoA + H2O = L-2-acetamido-6-oxoheptanedioate + CoA. It functions in the pathway amino-acid biosynthesis; L-lysine biosynthesis via DAP pathway; LL-2,6-diaminopimelate from (S)-tetrahydrodipicolinate (acetylase route): step 1/3. In terms of biological role, catalyzes the transfer of an acetyl group from acetyl-CoA to tetrahydrodipicolinate. The sequence is that of 2,3,4,5-tetrahydropyridine-2,6-dicarboxylate N-acetyltransferase from Exiguobacterium sibiricum (strain DSM 17290 / CCUG 55495 / CIP 109462 / JCM 13490 / 255-15).